The chain runs to 76 residues: UPF0248 protein MmarC6_0667 (76 aa).

It belongs to the UPF0248 family.

This Methanococcus maripaludis (strain C6 / ATCC BAA-1332) protein is UPF0248 protein MmarC6_0667.